Reading from the N-terminus, the 351-residue chain is THO complex subunit 3 (351 aa).

The interval 1–20 (MAVPAAAMGPSALGQSGPGS) is disordered. At Ala2 the chain carries N-acetylalanine. WD repeat units lie at residues 53–94 (AHSA…KENN), 97–137 (GHGD…CIAT), 139–178 (NTKG…SKAE), 180–221 (QFKF…QSIN), 222–261 (AHPS…CVRC), and 264–303 (RLDW…KLWE).

The protein belongs to the THOC3 family. As to quaternary structure, component of the THO subcomplex, which is composed of THOC1, THOC2, THOC3, THOC5, THOC6 and THOC7. The THO subcomplex interacts with DDX39B to form the THO-DDX39B complex which multimerizes into a 28-subunit tetrameric assembly. Component of the transcription/export (TREX) complex at least composed of ALYREF/THOC4, DDX39B, SARNP/CIP29, CHTOP and the THO subcomplex; in the complex interacts with THOC2. TREX seems to have a dynamic structure involving ATP-dependent remodeling.

It localises to the nucleus. The protein resides in the nucleus speckle. Component of the THO subcomplex of the TREX complex which is thought to couple mRNA transcription, processing and nuclear export, and which specifically associates with spliced mRNA and not with unspliced pre-mRNA. Required for efficient export of polyadenylated RNA and spliced mRNA. The THOC1-THOC2-THOC3 core complex alone is sufficient to bind export factor NXF1-NXT1 and promote ATPase activity of DDX39B. TREX is recruited to spliced mRNAs by a transcription-independent mechanism, binds to mRNA upstream of the exon-junction complex (EJC) and is recruited in a splicing- and cap-dependent manner to a region near the 5' end of the mRNA where it functions in mRNA export to the cytoplasm via the TAP/NXF1 pathway. Its function is as follows. (Microbial infection) The TREX complex is essential for the export of Kaposi's sarcoma-associated herpesvirus (KSHV) intronless mRNAs and infectious virus production. This is THO complex subunit 3 (THOC3) from Homo sapiens (Human).